Reading from the N-terminus, the 413-residue chain is Alpha-1-antitrypsin-like protein CM55-MS (413 aa).

Positions 1–24 are cleaved as a signal peptide; that stretch reads MPSSISWGLLLLAALSCLGPGSLA. At Q25 the chain carries Pyrrolidone carboxylic acid. Residues N65, N102, N165, and N266 are each glycosylated (N-linked (GlcNAc...) asparagine). The interval 368-387 is RCL; the sequence is GATVGGITFMSRPKEVIFDR.

Belongs to the serpin family. As to expression, expressed in liver.

Its subcellular location is the secreted. Functionally, serine protease inhibitor. In Tamias sibiricus (Siberian chipmunk), this protein is Alpha-1-antitrypsin-like protein CM55-MS.